The following is a 91-amino-acid chain: Small ribosomal subunit protein uS19 (91 aa).

Belongs to the universal ribosomal protein uS19 family.

Its function is as follows. Protein S19 forms a complex with S13 that binds strongly to the 16S ribosomal RNA. In Bordetella bronchiseptica (strain ATCC BAA-588 / NCTC 13252 / RB50) (Alcaligenes bronchisepticus), this protein is Small ribosomal subunit protein uS19.